The following is a 206-amino-acid chain: Protease (206 aa).

Active-site residues include H54, D71, and C122.

This sequence belongs to the peptidase C5 family. In terms of assembly, interacts with protease cofactor pVI-C; this interaction is necessary for protease activation.

The protein resides in the virion. The protein localises to the host nucleus. It catalyses the reaction Cleaves proteins of the adenovirus and its host cell at two consensus sites: -Yaa-Xaa-Gly-Gly-|-Xaa- and -Yaa-Xaa-Gly-Xaa-|-Gly- (in which Yaa is Met, Ile or Leu, and Xaa is any amino acid).. With respect to regulation, requires DNA and protease cofactor for maximal activation. Inside nascent virions, becomes partially activated by binding to the viral DNA, allowing it to cleave the cofactor that binds to the protease and fully activates it. Actin, like the viral protease cofactor, seems to act as a cofactor in the cleavage of cytokeratin 18 and of actin itself. In terms of biological role, cleaves viral precursor proteins (pTP, pIIIa, pVI, pVII, pVIII, and pX) inside newly assembled particles giving rise to mature virions. Protease complexed to its cofactor slides along the viral DNA to specifically locate and cleave the viral precursors. Mature virions have a weakened organization compared to the unmature virions, thereby facilitating subsequent uncoating. Without maturation, the particle lacks infectivity and is unable to uncoat. Late in adenovirus infection, in the cytoplasm, may participate in the cytoskeleton destruction. Cleaves host cell cytoskeletal keratins K7 and K18. The protein is Protease of Homo sapiens (Human).